A 719-amino-acid chain; its full sequence is Photosystem I P700 chlorophyll a apoprotein A1 (719 aa).

Helical transmembrane passes span 59-82, 145-168, 184-208, 280-298, 335-358, 374-400, 422-444, and 520-538; these read IFGAHFGQLAIIFIWLSGMYFHGA, LYCTAVGALIFAGLMFFAGWFHYH, LNHHLAGLLGLGSLGWAGHQIHVSL, TAHHHLAIAVLFLVAGHMY, WHAQLAINLAMLGSLTIIVSHHMY, LSLFTHHMWIGGFLVVGAAAHAAIFMV, AIISHLNWVCIFLGFHSFGLYIH, and FLVHHIHAFTIHVTVLILL. [4Fe-4S] cluster contacts are provided by Cys-562 and Cys-571. Helical transmembrane passes span 578–599 and 653–675; these read HVFLGLFWMYNSISVVIFHFSW and LSAYGLLFLGAHFVWAFSLMFLF. His-664 contributes to the chlorophyll a' binding site. Residues Met-672 and Tyr-680 each coordinate chlorophyll a. Residue Trp-681 coordinates phylloquinone. A helical membrane pass occupies residues 713-719; the sequence is AVGVTHT.

It belongs to the PsaA/PsaB family. In terms of assembly, the PsaA/B heterodimer binds the P700 chlorophyll special pair and subsequent electron acceptors. PSI consists of a core antenna complex that captures photons, and an electron transfer chain that converts photonic excitation into a charge separation. The eukaryotic PSI reaction center is composed of at least 11 subunits. It depends on P700 is a chlorophyll a/chlorophyll a' dimer, A0 is one or more chlorophyll a, A1 is one or both phylloquinones and FX is a shared 4Fe-4S iron-sulfur center. as a cofactor.

It localises to the plastid. The protein resides in the chloroplast thylakoid membrane. It catalyses the reaction reduced [plastocyanin] + hnu + oxidized [2Fe-2S]-[ferredoxin] = oxidized [plastocyanin] + reduced [2Fe-2S]-[ferredoxin]. In terms of biological role, psaA and PsaB bind P700, the primary electron donor of photosystem I (PSI), as well as the electron acceptors A0, A1 and FX. PSI is a plastocyanin-ferredoxin oxidoreductase, converting photonic excitation into a charge separation, which transfers an electron from the donor P700 chlorophyll pair to the spectroscopically characterized acceptors A0, A1, FX, FA and FB in turn. Oxidized P700 is reduced on the lumenal side of the thylakoid membrane by plastocyanin. This is Photosystem I P700 chlorophyll a apoprotein A1 from Asplenium nidus (Bird's nest fern).